A 326-amino-acid polypeptide reads, in one-letter code: Tetraacyldisaccharide 4'-kinase (326 aa).

Thr-55–Thr-62 contacts ATP.

This sequence belongs to the LpxK family.

It catalyses the reaction a lipid A disaccharide + ATP = a lipid IVA + ADP + H(+). Its pathway is glycolipid biosynthesis; lipid IV(A) biosynthesis; lipid IV(A) from (3R)-3-hydroxytetradecanoyl-[acyl-carrier-protein] and UDP-N-acetyl-alpha-D-glucosamine: step 6/6. Functionally, transfers the gamma-phosphate of ATP to the 4'-position of a tetraacyldisaccharide 1-phosphate intermediate (termed DS-1-P) to form tetraacyldisaccharide 1,4'-bis-phosphate (lipid IVA). This is Tetraacyldisaccharide 4'-kinase from Tolumonas auensis (strain DSM 9187 / NBRC 110442 / TA 4).